A 696-amino-acid chain; its full sequence is MKFAEHLSAHITPEWRKQYTQYEAFKDMLYSAQDQAPSVEVTDEDTVKRYFAKFEEKFFQTCEKELAKINTFYSEKLAEAQRRFATLQNELQSSLDVQKESSGVTTLRQRRKPVFHLSHEERVQHRNIKDLKLAFSEFYLSLILLQNYQNLNFTGFRKILKKHDKILETSRGADWRVIHVEVAPFYTCKKINQLISETEAVVTNELEDGDRQKAMKRLRVPPLGAAQPAPAWTTFRVGLFCGIFIGLNITLGFAAVFKLETDRTVWPLIRIYRGGFLLIEFLFLLGINTYGWRQAGVNHVLIFELNPRNNLSHQHLFEIAGFLGILWCLSLLACFFAPISIIPIYVYPLALYGFMVFFLINPTKTFYYKSRFWLLKLLFRVFTAPFHKVGFADFWLADQLNSLSVILMDLEYMICFYSFELKWDESKGLLPNDPQEPEFCHKYSYGVRAIVQCIPAWLRFIQCLRRYRDTRRAFPHLVNAGKYSTTFFTVTFAALYSTHKEQNHSDTVVFFYLWVFFCIISSCYTLIWDLKMDWGLFDKNAGENTFLREEIVYPQKAYYYCAIIEDVILRFAWTIQISITATTFKPHVGDIIATVFAPLEVFRRFVWNFFRLENEHLDNCGEFRAVRDISVAPLNADDQTLLEQMMDQEDGVRNRQKNRSWKYNQSISLRRPRLASQSKARDTKVLIEDTDDEANT.

Residues 1-228 are Cytoplasmic-facing; the sequence is MKFAEHLSAH…RVPPLGAAQP (228 aa). The SPX domain occupies 2-224; it reads KFAEHLSAHI…MKRLRVPPLG (223 aa). Residues 158-165 are important for inositol polyphosphate binding; sequence KILKKHDK. Residues 229–259 form a helical membrane-spanning segment; the sequence is APAWTTFRVGLFCGIFIGLNITLGFAAVFKL. The Extracellular segment spans residues 260–264; sequence ETDRT. A helical membrane pass occupies residues 265–296; it reads VWPLIRIYRGGFLLIEFLFLLGINTYGWRQAG. Over 297-309 the chain is Cytoplasmic; sequence VNHVLIFELNPRN. A helical transmembrane segment spans residues 310–337; sequence NLSHQHLFEIAGFLGILWCLSLLACFFA. Residues 338–343 are Extracellular-facing; sequence PISIIP. A helical transmembrane segment spans residues 344–365; sequence IYVYPLALYGFMVFFLINPTKT. The helical intramembrane region spans 366–383; it reads FYYKSRFWLLKLLFRVFT. Residues 384–388 lie on the Cytoplasmic side of the membrane; it reads APFHK. Residues 389 to 422 traverse the membrane as a discontinuously helical segment; it reads VGFADFWLADQLNSLSVILMDLEYMICFYSFELK. Phosphate is bound by residues Asp-398 and Asn-401. Residues 423 to 429 lie on the Extracellular side of the membrane; the sequence is WDESKGL. The chain crosses the membrane as a discontinuously helical span at residues 430 to 471; sequence LPNDPQEPEFCHKYSYGVRAIVQCIPAWLRFIQCLRRYRDTR. In terms of domain architecture, EXS spans 439–643; it reads FCHKYSYGVR…LNADDQTLLE (205 aa). Arg-472 is a topological domain (cytoplasmic). Residues 473-503 form a helical membrane-spanning segment; the sequence is AFPHLVNAGKYSTTFFTVTFAALYSTHKEQN. Phosphate-binding residues include Lys-482 and Tyr-483. Residues 504-506 lie on the Extracellular side of the membrane; that stretch reads HSD. A helical transmembrane segment spans residues 507–534; it reads TVVFFYLWVFFCIISSCYTLIWDLKMDW. Residues 535–553 are Cytoplasmic-facing; that stretch reads GLFDKNAGENTFLREEIVY. Residues 554 to 585 traverse the membrane as a discontinuously helical segment; the sequence is PQKAYYYCAIIEDVILRFAWTIQISITATTFK. Position 570 (Arg-570) interacts with phosphate. Residues 586–587 lie on the Extracellular side of the membrane; that stretch reads PH. Residues 588–626 form a helical membrane-spanning segment; it reads VGDIIATVFAPLEVFRRFVWNFFRLENEHLDNCGEFRAV. Arg-603 and Arg-604 together coordinate phosphate. The Cytoplasmic portion of the chain corresponds to 627-696; it reads RDISVAPLNA…IEDTDDEANT (70 aa). The residue at position 668 (Ser-668) is a Phosphoserine. Thr-690 bears the Phosphothreonine mark.

Belongs to the SYG1 (TC 2.A.94) family. As to quaternary structure, homodimer.

The protein localises to the cell membrane. The catalysed reaction is phosphate(in) = phosphate(out). In terms of biological role, inorganic ion transporter that mediates phosphate ion export across plasma membrane. Plays a major role in phosphate homeostasis, preventing intracellular phosphate accumulation and possible calcium phosphate precipitation, ultimately preserving calcium signaling. Binds inositol hexakisphosphate (Ins6P) and similar inositol polyphosphates, such as 5-diphospho-inositol pentakisphosphate (5-InsP7), which are important intracellular signaling molecules involved in regulation of phosphate flux. Functionally, (Microbial infection) Receptor for xenotropic and polytropic murine leukemia (X- and P-MLV) retroviruses. The sequence is that of Solute carrier family 53 member 1 (Xpr1) from Mus spretus (Western Mediterranean mouse).